The sequence spans 358 residues: MACIVEDPQRAGQSNETQIALISGVPDDISKSCLARVPREYHMAMKCVSRRWRDFVCSDEMCDYRNEFNLAESWIYALCRDISGGVFLHMLNPFSSRRSWKRINDYPYIPMREGMGFAVLGKRLFVLGGCGWLEDATDEIYCYDAAMNTWFDVVPPLSTKRCYFACETLDGKIIAIGGLGLNPNAKRTWDIYDPLTRTCKSCSDVNIVPEMEDSFVMDGRIYIRGGVGGSSTAVYSASSGIWERMDDDMASGWRGPAVVVAGDLYVLDQTFGAKLTMWCKDTRMWIHIGKLSQLVMKQPCRLVSIGNSIFVIGKDCSTVVIDVENVRKNKMNGVMVCSSIPKTWDDDIDVISCKSVAI.

The 48-residue stretch at 20–67 (ALISGVPDDISKSCLARVPREYHMAMKCVSRRWRDFVCSDEMCDYRNE) folds into the F-box domain. Kelch repeat units follow at residues 78 to 122 (LCRD…VLGK), 123 to 171 (RLFV…TLDG), 173 to 219 (IIAI…VMDG), 220 to 269 (RIYI…VLDQ), 271 to 307 (FGAKLTMWCKDTRMWIHIGKLSQLVMKQPCRLVSIGN), and 308 to 355 (SIFV…SCKS).

As to quaternary structure, part of a SCF (SKP1-cullin-F-box) protein ligase complex. Interacts with SKP1A/ASK1.

It functions in the pathway protein modification; protein ubiquitination. The chain is F-box/kelch-repeat protein SKIP4 (SKIP4) from Arabidopsis thaliana (Mouse-ear cress).